Consider the following 157-residue polypeptide: uncharacterized protein (157 aa).

The N-acetyltransferase domain maps to 9–146; it reads LLINYKTLDE…GDFYVWHPET (138 aa).

This is an uncharacterized protein from Bacillus cereus (strain ZK / E33L).